A 737-amino-acid polypeptide reads, in one-letter code: NAD-dependent protein deacetylase sirtuin-1 (737 aa).

The segment covering 1–28 has biased composition (low complexity); sequence MADEVALALQAAGSPSAAAAMEAASQPA. 2 disordered regions span residues 1 to 56 and 75 to 125; these read MADE…AVAP and EAAG…EAAA. Residue Ala2 is modified to N-acetylalanine. The segment at 2 to 131 is interaction with CLOCK; sequence ADEVALALQA…EAAAAAAAAA (130 aa). The interval 2–268 is interaction with H1-4; it reads ADEVALALQA…SCGIPDFRSR (267 aa). Residues Ser14 and Ser25 each carry the phosphoserine modification. The Nuclear localization signal motif lies at 32 to 39; that stretch reads LRKRPRRD. Ser46 is modified (phosphoserine; by MAPK8). 2 stretches are compositionally biased toward low complexity: residues 46-56 and 75-94; these read SPGEPSAAVAP and EAAG…AVAG. A compositionally biased stretch (acidic residues) spans 111–123; it reads DFDDDEGEEEDEA. Residues 135–533 form an interaction with CCAR2 region; that stretch reads RDNLLLTDGL…LHISEDSSSP (399 aa). The short motif at 138-145 is the Nuclear export signal element; sequence LLLTDGLL. 4 positions are modified to phosphoserine: Ser151, Ser154, Ser164, and Ser165. Residues 152–171 are disordered; sequence CESDDDDRTSHASSSDWTPR. Positions 223–230 match the Nuclear localization signal motif; that stretch reads PPKRKKRK. In terms of domain architecture, Deacetylase sirtuin-type spans 228 to 488; sequence KRKDINTIED…NELCHRLGGE (261 aa). The residue at position 230 (Lys230) is an N6-acetyllysine. Positions 248-251 are required for interaction with the sumoylated form of CCAR2; that stretch reads IIVL. Residues 253-272 and 337-340 contribute to the NAD(+) site; these read GAGV…DGIY and QNID. His355 acts as the Proton acceptor in catalysis. Zn(2+)-binding residues include Cys363 and Cys366. Lys369 is modified (N6-acetyllysine). Residues Cys387 and Cys390 each contribute to the Zn(2+) site. 2 positions are modified to S-nitrosocysteine: Cys387 and Cys390. At Lys422 the chain carries N6-acetyllysine. Positions 425 to 431 match the Nuclear export signal motif; sequence VDLLIVI. NAD(+)-binding positions include 432–434, 457–459, and Cys474; these read GSS and NRE. The residue at position 505 (Lys505) is an N6-acetyllysine. The segment at 514–539 is disordered; it reads VHLSELPPTPLHISEDSSSPERTVPQ. Thr522 carries the post-translational modification Phosphothreonine; by DYRK1A, DYRK3 and MAPK8. At Ser527 the chain carries Phosphoserine. Over residues 529-539 the composition is skewed to polar residues; the sequence is DSSSPERTVPQ. Thr536 carries the phosphothreonine modification. Lys600 carries the N6-acetyllysine modification. Residues Ser649 and Ser651 each carry the phosphoserine; by CaMK2 modification. Residues 653–713 form a disordered region; it reads DDVLSSSSCG…GSGFGADGGD (61 aa). A compositionally biased stretch (low complexity) spans 656–676; that stretch reads LSSSSCGSNSDSGTCQSPSLE. The span at 677–697 shows a compositional bias: acidic residues; the sequence is EPLEDESEIEEFYNGLEDDTE. Phosphoserine is present on Ser737.

It belongs to the sirtuin family. Class I subfamily. In terms of assembly, interacts with XBP1 isoform 2. Found in a complex with PCAF and MYOD1 Component of the eNoSC complex, composed of SIRT1, SUV39H1 and RRP8. Interacts with HES1, HEY2 and PML. Interacts with RPS19BP1/AROS. Interacts with CCAR2 (via N-terminus); the interaction disrupts the interaction between SIRT1 and p53/TP53. Interacts with SETD7; the interaction induces the dissociation of SIRT1 from p53/TP53 and increases p53/TP53 activity. Interacts with MYCN, NR1I2, CREBZF, TSC2, TLE1, FOS, JUN, NR0B2, PPARG, NCOR, IRS1, IRS2 and NMNAT1. Interacts with HNF1A; the interaction occurs under nutrient restriction. Interacts with SUZ12; the interaction mediates the association with the PRC4 histone methylation complex which is specific as an association with PCR2 and PCR3 complex variants is not found. Interacts with FOXO1; the interaction deacetylates FOXO1, enhances its DNA-binding ability and increases its transcriptional activity. Interacts with BCL6; leads to a epigenetic repression of specific target genes. Interacts with CLOCK, BMAL1 and PER2. Interacts with PPARA; the interaction seems to be modulated by NAD(+) levels. Interacts with NR1H3 and this interaction is inhibited in the presence of CCAR2. Interacts with CHEK2 and p53/TP53. Exhibits a preferential interaction with sumoylated CCAR2 over its unmodified form. Interacts with PACS2. Interacts with SIRT7. Interacts with PUS7. Interacts with TULP3. Interacts with MORN3; the interaction enhances the ubiquitination of p53/TP53. It depends on Zn(2+) as a cofactor. In terms of processing, methylated on multiple lysine residues; methylation is enhanced after DNA damage and is dispensable for deacetylase activity toward p53/TP53. Post-translationally, phosphorylated. Phosphorylated by STK4/MST1, resulting in inhibition of SIRT1-mediated p53/TP53 deacetylation. Phosphorylation by MAPK8/JNK1 at Ser-46 and Thr-522 leads to increased nuclear localization and enzymatic activity. Phosphorylation at Thr-522 by DYRK1A and DYRK3 activates deacetylase activity and promotes cell survival. Phosphorylation by mammalian target of rapamycin complex 1 (mTORC1) at Ser-46 inhibits deacetylation activity. Phosphorylated by CaMK2, leading to increased p53/TP53 and NF-kappa-B p65/RELA deacetylation activity. Proteolytically cleaved by cathepsin B upon TNF-alpha treatment to yield catalytic inactive but stable SirtT1 75 kDa fragment (75SirT1). In terms of processing, S-nitrosylated by GAPDH, leading to inhibit the NAD-dependent protein deacetylase activity. Post-translationally, acetylated at various Lys residues. Deacetylated via an autocatalytic mechanism. Autodeacetylation at Lys-230 promotes its protein deacetylase activity. Ubiquitinated; leading to degradation. Deubiquitinated by USP22; leading to stabilization. In terms of tissue distribution, widely expressed. Weakly expressed in liver and skeletal muscle.

Its subcellular location is the nucleus. It localises to the PML body. The protein resides in the cytoplasm. It is found in the mitochondrion. The enzyme catalyses N(6)-acetyl-L-lysyl-[protein] + NAD(+) + H2O = 2''-O-acetyl-ADP-D-ribose + nicotinamide + L-lysyl-[protein]. The catalysed reaction is N(6)-propanoyl-L-lysyl-[protein] + NAD(+) + H2O = 3''-O-propanoyl-ADP-D-ribose + nicotinamide + L-lysyl-[protein]. It catalyses the reaction N(6)-(2E)-butenoyl-L-lysyl-[protein] + NAD(+) + H2O = 2''-O-(2E)-but-2-enoyl-ADP-D-ribose + nicotinamide + L-lysyl-[protein]. It carries out the reaction N(6)-[(S)-lactoyl]-L-lysyl-[protein] + NAD(+) + H2O = 2''-O-(S)-lactoyl-ADP-D-ribose + nicotinamide + L-lysyl-[protein]. Its activity is regulated as follows. Activated by resveratrol (3,5,4'-trihydroxy-trans-stilbene), butein (3,4,2',4'-tetrahydroxychalcone), piceatannol (3,5,3',4'-tetrahydroxy-trans-stilbene), Isoliquiritigenin (4,2',4'-trihydroxychalcone), fisetin (3,7,3',4'-tetrahydroxyflavone) and quercetin (3,5,7,3',4'-pentahydroxyflavone). MAPK8/JNK1 and RPS19BP1/AROS act as positive regulators of deacetylation activity. Inhibited by nicotinamide. Negatively regulated by CCAR2. Its function is as follows. NAD-dependent protein deacetylase that links transcriptional regulation directly to intracellular energetics and participates in the coordination of several separated cellular functions such as cell cycle, response to DNA damage, metabolism, apoptosis and autophagy. Can modulate chromatin function through deacetylation of histones and can promote alterations in the methylation of histones and DNA, leading to transcriptional repression. Deacetylates a broad range of transcription factors and coregulators, thereby regulating target gene expression positively and negatively. Serves as a sensor of the cytosolic ratio of NAD(+)/NADH which is altered by glucose deprivation and metabolic changes associated with caloric restriction. Is essential in skeletal muscle cell differentiation and in response to low nutrients mediates the inhibitory effect on skeletal myoblast differentiation which also involves 5'-AMP-activated protein kinase (AMPK) and nicotinamide phosphoribosyltransferase (NAMPT). Component of the eNoSC (energy-dependent nucleolar silencing) complex, a complex that mediates silencing of rDNA in response to intracellular energy status and acts by recruiting histone-modifying enzymes. The eNoSC complex is able to sense the energy status of cell: upon glucose starvation, elevation of NAD(+)/NADP(+) ratio activates SIRT1, leading to histone H3 deacetylation followed by dimethylation of H3 at 'Lys-9' (H3K9me2) by SUV39H1 and the formation of silent chromatin in the rDNA locus. Deacetylates 'Lys-266' of SUV39H1, leading to its activation. Inhibits skeletal muscle differentiation by deacetylating PCAF and MYOD1. Deacetylates H2A and 'Lys-26' of H1-4. Deacetylates 'Lys-16' of histone H4 (in vitro). Involved in NR0B2/SHP corepression function through chromatin remodeling: Recruited to LRH1 target gene promoters by NR0B2/SHP thereby stimulating histone H3 and H4 deacetylation leading to transcriptional repression. Proposed to contribute to genomic integrity via positive regulation of telomere length; however, reports on localization to pericentromeric heterochromatin are conflicting. Proposed to play a role in constitutive heterochromatin (CH) formation and/or maintenance through regulation of the available pool of nuclear SUV39H1. Upon oxidative/metabolic stress decreases SUV39H1 degradation by inhibiting SUV39H1 polyubiquitination by MDM2. This increase in SUV39H1 levels enhances SUV39H1 turnover in CH, which in turn seems to accelerate renewal of the heterochromatin which correlates with greater genomic integrity during stress response. Deacetylates 'Lys-382' of p53/TP53 and impairs its ability to induce transcription-dependent proapoptotic program and modulate cell senescence. Deacetylates TAF1B and thereby represses rDNA transcription by the RNA polymerase I. Deacetylates MYC, promotes the association of MYC with MAX and decreases MYC stability leading to compromised transformational capability. Deacetylates FOXO3 in response to oxidative stress thereby increasing its ability to induce cell cycle arrest and resistance to oxidative stress but inhibiting FOXO3-mediated induction of apoptosis transcriptional activity; also leading to FOXO3 ubiquitination and protesomal degradation. Appears to have a similar effect on MLLT7/FOXO4 in regulation of transcriptional activity and apoptosis. Deacetylates DNMT1; thereby impairs DNMT1 methyltransferase-independent transcription repressor activity, modulates DNMT1 cell cycle regulatory function and DNMT1-mediated gene silencing. Deacetylates RELA/NF-kappa-B p65 thereby inhibiting its transactivating potential and augments apoptosis in response to TNF-alpha. Deacetylates HIF1A, KAT5/TIP60, RB1 and HIC1. Deacetylates FOXO1, which increases its DNA binding ability and enhances its transcriptional activity leading to increased gluconeogenesis in liver. Inhibits E2F1 transcriptional activity and apoptotic function, possibly by deacetylation. Involved in HES1- and HEY2-mediated transcriptional repression. In cooperation with MYCN seems to be involved in transcriptional repression of DUSP6/MAPK3 leading to MYCN stabilization by phosphorylation at 'Ser-62'. Deacetylates MEF2D. Required for antagonist-mediated transcription suppression of AR-dependent genes which may be linked to local deacetylation of histone H3. Represses HNF1A-mediated transcription. Required for the repression of ESRRG by CREBZF. Deacetylates NR1H3 and NR1H2 and deacetylation of NR1H3 at 'Lys-434' positively regulates transcription of NR1H3:RXR target genes, promotes NR1H3 proteasomal degradation and results in cholesterol efflux; a promoter clearing mechanism after reach round of transcription is proposed. Involved in lipid metabolism: deacetylates LPIN1, thereby inhibiting diacylglycerol synthesis. Implicated in regulation of adipogenesis and fat mobilization in white adipocytes by repression of PPARG which probably involves association with NCOR1 and SMRT/NCOR2. Deacetylates p300/EP300 and PRMT1. Deacetylates ACSS2 leading to its activation, and HMGCS1 deacetylation. Involved in liver and muscle metabolism. Through deacetylation and activation of PPARGC1A is required to activate fatty acid oxidation in skeletal muscle under low-glucose conditions and is involved in glucose homeostasis. Involved in regulation of PPARA and fatty acid beta-oxidation in liver. Involved in positive regulation of insulin secretion in pancreatic beta cells in response to glucose; the function seems to imply transcriptional repression of UCP2. Proposed to deacetylate IRS2 thereby facilitating its insulin-induced tyrosine phosphorylation. Deacetylates SREBF1 isoform SREBP-1C thereby decreasing its stability and transactivation in lipogenic gene expression. Involved in DNA damage response by repressing genes which are involved in DNA repair, such as XPC and TP73, deacetylating XRCC6/Ku70, and facilitating recruitment of additional factors to sites of damaged DNA, such as SIRT1-deacetylated NBN can recruit ATM to initiate DNA repair and SIRT1-deacetylated XPA interacts with RPA2. Also involved in DNA repair of DNA double-strand breaks by homologous recombination and specifically single-strand annealing independently of XRCC6/Ku70 and NBN. Promotes DNA double-strand breaks by mediating deacetylation of SIRT6. Transcriptional suppression of XPC probably involves an E2F4:RBL2 suppressor complex and protein kinase B (AKT) signaling. Transcriptional suppression of TP73 probably involves E2F4 and PCAF. Deacetylates WRN thereby regulating its helicase and exonuclease activities and regulates WRN nuclear translocation in response to DNA damage. Deacetylates APEX1 at 'Lys-6' and 'Lys-7' and stimulates cellular AP endonuclease activity by promoting the association of APEX1 to XRCC1. Catalyzes deacetylation of ERCC4/XPF, thereby impairing interaction with ERCC1 and nucleotide excision repair (NER). Increases p53/TP53-mediated transcription-independent apoptosis by blocking nuclear translocation of cytoplasmic p53/TP53 and probably redirecting it to mitochondria. Deacetylates XRCC6/Ku70 at 'Lys-537' and 'Lys-540' causing it to sequester BAX away from mitochondria thereby inhibiting stress-induced apoptosis. Is involved in autophagy, presumably by deacetylating ATG5, ATG7 and MAP1LC3B/ATG8. Deacetylates AKT1 which leads to enhanced binding of AKT1 and PDK1 to PIP3 and promotes their activation. Proposed to play role in regulation of STK11/LBK1-dependent AMPK signaling pathways implicated in cellular senescence which seems to involve the regulation of the acetylation status of STK11/LBK1. Can deacetylate STK11/LBK1 and thereby increase its activity, cytoplasmic localization and association with STRAD; however, the relevance of such activity in normal cells is unclear. In endothelial cells is shown to inhibit STK11/LBK1 activity and to promote its degradation. Deacetylates SMAD7 at 'Lys-64' and 'Lys-70' thereby promoting its degradation. Deacetylates CIITA and augments its MHC class II transactivation and contributes to its stability. Deacetylates MECOM/EVI1. Deacetylates PML at 'Lys-487' and this deacetylation promotes PML control of PER2 nuclear localization. During the neurogenic transition, represses selective NOTCH1-target genes through histone deacetylation in a BCL6-dependent manner and leading to neuronal differentiation. Regulates the circadian expression of several core clock genes, including BMAL1, RORC, PER2 and CRY1 and plays a critical role in maintaining a controlled rhythmicity in histone acetylation, thereby contributing to circadian chromatin remodeling. Deacetylates BMAL1 and histones at the circadian gene promoters in order to facilitate repression by inhibitory components of the circadian oscillator. Deacetylates PER2, facilitating its ubiquitination and degradation by the proteasome. Protects cardiomyocytes against palmitate-induced apoptosis. Deacetylates XBP1 isoform 2; deacetylation decreases protein stability of XBP1 isoform 2 and inhibits its transcriptional activity. Deacetylates PCK1 and directs its activity toward phosphoenolpyruvate production promoting gluconeogenesis. Involved in the CCAR2-mediated regulation of PCK1 and NR1D1. Deacetylates CTNB1 at 'Lys-49'. In POMC (pro-opiomelanocortin) neurons, required for leptin-induced activation of PI3K signaling. Deacetylates SOX9; promoting SOX9 nuclear localization and transactivation activity. Involved in the regulation of centrosome duplication: Deacetylates CENATAC in G1 phase, allowing for SASS6 accumulation on the centrosome and subsequent procentriole assembly. Deacetylates NDC80/HEC1. In addition to protein deacetylase activity, also acts as a protein-lysine deacylase by mediating protein delactylation, depropionylation and decrotonylation. Mediates depropionylation of Osterix (SP7). Catalyzes decrotonylation of histones; it however does not represent a major histone decrotonylase. Mediates protein delactylation of TEAD1 and YAP1. Deacetylates 'Lys-382' of p53/TP53, however with lower activity than isoform 1. In combination, the two isoforms exert an additive effect. Isoform 2 regulates p53/TP53 expression and cellular stress response and is in turn repressed by p53/TP53 presenting a SIRT1 isoform-dependent auto-regulatory loop. In terms of biological role, catalytically inactive 75SirT1 may be involved in regulation of apoptosis. May be involved in protecting chondrocytes from apoptotic death by associating with cytochrome C and interfering with apoptosome assembly. In Mus musculus (Mouse), this protein is NAD-dependent protein deacetylase sirtuin-1 (Sirt1).